We begin with the raw amino-acid sequence, 447 residues long: GTPase Der (447 aa).

2 EngA-type G domains span residues 4–165 (KIIT…PEEE) and 180–357 (LQIV…KIWN). GTP-binding positions include 10–17 (GRPNVGKS), 57–61 (DTPGL), 119–122 (NKCE), 186–193 (GRPNAGKS), 233–237 (DTAGL), and 298–301 (NKWD). Residues 358–443 (KKITTSKLNE…PIRFTYVKTK (86 aa)) enclose the KH-like domain.

It belongs to the TRAFAC class TrmE-Era-EngA-EngB-Septin-like GTPase superfamily. EngA (Der) GTPase family. Associates with the 50S ribosomal subunit.

GTPase that plays an essential role in the late steps of ribosome biogenesis. The protein is GTPase Der of Rickettsia felis (strain ATCC VR-1525 / URRWXCal2) (Rickettsia azadi).